The primary structure comprises 63 residues: Large ribosomal subunit protein uL29 (63 aa).

The protein belongs to the universal ribosomal protein uL29 family.

This Flavobacterium psychrophilum (strain ATCC 49511 / DSM 21280 / CIP 103535 / JIP02/86) protein is Large ribosomal subunit protein uL29.